The primary structure comprises 280 residues: Orotidine 5'-phosphate decarboxylase (280 aa).

Lys97 serves as the catalytic Proton donor.

Belongs to the OMP decarboxylase family. Type 2 subfamily.

It catalyses the reaction orotidine 5'-phosphate + H(+) = UMP + CO2. Its pathway is pyrimidine metabolism; UMP biosynthesis via de novo pathway; UMP from orotate: step 2/2. This Corynebacterium efficiens (strain DSM 44549 / YS-314 / AJ 12310 / JCM 11189 / NBRC 100395) protein is Orotidine 5'-phosphate decarboxylase (pyrF).